Reading from the N-terminus, the 214-residue chain is Cytochrome b (214 aa).

Helical transmembrane passes span 31–51, 75–96, 111–131, and 176–196; these read FGSM…FLAI, WIMQ…YIHI, WLSG…GYVL, and FFAL…LHIL. Heme b is bound by residues His-81 and His-95. Positions 180 and 194 each coordinate heme b. Position 199 (His-199) interacts with a ubiquinone.

This sequence belongs to the cytochrome b family. The cytochrome bc1 complex contains 3 respiratory subunits (MT-CYB, CYC1 and UQCRFS1), 2 core proteins (UQCRC1 and UQCRC2) and probably 6 low-molecular weight proteins. Heme b serves as cofactor.

The protein resides in the mitochondrion inner membrane. Functionally, component of the ubiquinol-cytochrome c reductase complex (complex III or cytochrome b-c1 complex) that is part of the mitochondrial respiratory chain. The b-c1 complex mediates electron transfer from ubiquinol to cytochrome c. Contributes to the generation of a proton gradient across the mitochondrial membrane that is then used for ATP synthesis. The polypeptide is Cytochrome b (MT-CYB) (Crotalus atrox (Western diamondback rattlesnake)).